A 317-amino-acid chain; its full sequence is 4-hydroxy-3-methylbut-2-enyl diphosphate reductase (317 aa).

Cys12 is a [4Fe-4S] cluster binding site. Positions 41 and 74 each coordinate (2E)-4-hydroxy-3-methylbut-2-enyl diphosphate. Dimethylallyl diphosphate-binding residues include His41 and His74. Isopentenyl diphosphate contacts are provided by His41 and His74. Residue Cys96 coordinates [4Fe-4S] cluster. Residue His124 participates in (2E)-4-hydroxy-3-methylbut-2-enyl diphosphate binding. Position 124 (His124) interacts with dimethylallyl diphosphate. His124 serves as a coordination point for isopentenyl diphosphate. The Proton donor role is filled by Glu126. Thr169 contributes to the (2E)-4-hydroxy-3-methylbut-2-enyl diphosphate binding site. Cys199 contributes to the [4Fe-4S] cluster binding site. Residues Ser227, Ser228, Asn229, and Ser271 each coordinate (2E)-4-hydroxy-3-methylbut-2-enyl diphosphate. The dimethylallyl diphosphate site is built by Ser227, Ser228, Asn229, and Ser271. 4 residues coordinate isopentenyl diphosphate: Ser227, Ser228, Asn229, and Ser271.

It belongs to the IspH family. Requires [4Fe-4S] cluster as cofactor.

The enzyme catalyses isopentenyl diphosphate + 2 oxidized [2Fe-2S]-[ferredoxin] + H2O = (2E)-4-hydroxy-3-methylbut-2-enyl diphosphate + 2 reduced [2Fe-2S]-[ferredoxin] + 2 H(+). The catalysed reaction is dimethylallyl diphosphate + 2 oxidized [2Fe-2S]-[ferredoxin] + H2O = (2E)-4-hydroxy-3-methylbut-2-enyl diphosphate + 2 reduced [2Fe-2S]-[ferredoxin] + 2 H(+). Its pathway is isoprenoid biosynthesis; dimethylallyl diphosphate biosynthesis; dimethylallyl diphosphate from (2E)-4-hydroxy-3-methylbutenyl diphosphate: step 1/1. It participates in isoprenoid biosynthesis; isopentenyl diphosphate biosynthesis via DXP pathway; isopentenyl diphosphate from 1-deoxy-D-xylulose 5-phosphate: step 6/6. In terms of biological role, catalyzes the conversion of 1-hydroxy-2-methyl-2-(E)-butenyl 4-diphosphate (HMBPP) into a mixture of isopentenyl diphosphate (IPP) and dimethylallyl diphosphate (DMAPP). Acts in the terminal step of the DOXP/MEP pathway for isoprenoid precursor biosynthesis. The chain is 4-hydroxy-3-methylbut-2-enyl diphosphate reductase from Vibrio parahaemolyticus serotype O3:K6 (strain RIMD 2210633).